Consider the following 217-residue polypeptide: Small ribosomal subunit protein uS3c (217 aa).

Residues 43–117 (IKNYVQKNKR…KLNIAITRIA (75 aa)) enclose the KH type-2 domain.

It belongs to the universal ribosomal protein uS3 family. As to quaternary structure, part of the 30S ribosomal subunit.

The protein localises to the plastid. Its subcellular location is the chloroplast. In Platanus occidentalis (Sycamore), this protein is Small ribosomal subunit protein uS3c (rps3).